The sequence spans 247 residues: Adenosylcobinamide-GDP ribazoletransferase (247 aa).

The next 5 membrane-spanning stretches (helical) occupy residues 34–54 (IITF…VFMV), 59–79 (CGVP…TGGF), 113–133 (GGLA…ELAL), 138–158 (ILAS…LLMY), and 194–214 (VLLP…AIFI).

It belongs to the CobS family. It depends on Mg(2+) as a cofactor.

The protein localises to the cell inner membrane. The catalysed reaction is alpha-ribazole + adenosylcob(III)inamide-GDP = adenosylcob(III)alamin + GMP + H(+). The enzyme catalyses alpha-ribazole 5'-phosphate + adenosylcob(III)inamide-GDP = adenosylcob(III)alamin 5'-phosphate + GMP + H(+). It participates in cofactor biosynthesis; adenosylcobalamin biosynthesis; adenosylcobalamin from cob(II)yrinate a,c-diamide: step 7/7. In terms of biological role, joins adenosylcobinamide-GDP and alpha-ribazole to generate adenosylcobalamin (Ado-cobalamin). Also synthesizes adenosylcobalamin 5'-phosphate from adenosylcobinamide-GDP and alpha-ribazole 5'-phosphate. This chain is Adenosylcobinamide-GDP ribazoletransferase, found in Shigella dysenteriae serotype 1 (strain Sd197).